A 95-amino-acid polypeptide reads, in one-letter code: Mitochondrial import inner membrane translocase subunit Tim9 (95 aa).

Positions 35–59 (CFTDCIRDFTTRDVKDSEEKCSLNC) match the Twin CX3C motif motif. 2 disulfide bridges follow: C35/C59 and C39/C55.

The protein belongs to the small Tim family. In terms of assembly, heterohexamer; composed of 3 copies of Tim9 and 3 copies of Tim10, named soluble 70 kDa complex. The complex associates with the Tim22 component of the TIM22 complex. Interacts with multi-pass transmembrane proteins in transit.

It is found in the mitochondrion inner membrane. In terms of biological role, mitochondrial intermembrane chaperone that participates in the import and insertion of multi-pass transmembrane proteins into the mitochondrial inner membrane. May also be required for the transfer of beta-barrel precursors from the TOM complex to the sorting and assembly machinery (SAM complex) of the outer membrane. Acts as a chaperone-like protein that protects the hydrophobic precursors from aggregation and guide them through the mitochondrial intermembrane space. This is Mitochondrial import inner membrane translocase subunit Tim9 (Tim9a) from Drosophila melanogaster (Fruit fly).